We begin with the raw amino-acid sequence, 687 residues long: Glycine--tRNA ligase beta subunit (687 aa).

This sequence belongs to the class-II aminoacyl-tRNA synthetase family. Tetramer of two alpha and two beta subunits.

It localises to the cytoplasm. It carries out the reaction tRNA(Gly) + glycine + ATP = glycyl-tRNA(Gly) + AMP + diphosphate. This Geobacter sulfurreducens (strain ATCC 51573 / DSM 12127 / PCA) protein is Glycine--tRNA ligase beta subunit.